The sequence spans 501 residues: NAD(P)H-quinone oxidoreductase subunit 2, chloroplastic (501 aa).

14 helical membrane-spanning segments follow: residues 15–35, 40–60, 82–102, 107–127, 132–152, 167–187, 212–232, 244–264, 278–298, 307–327, 333–353, 378–398, 410–430, and 466–486; these read ILPECILIFSLLIILIIDLTF, TIWLYFISLTSLLISIIILLF, IFQSFIVFCSILCIPLSIEYI, MAIPEFLIFILTATVGGMFLC, LVTIFVSLECLSLCSYLLCGY, LLIGGTSSSILAYGFSWLYGL, TFIAFICILVGLAFKLSLVPF, PTPVVAFLSVTSKIAGLALAT, WKIFLEILAILSMILGNLVAI, LAYSSISQIGYILIGLITGDL, MTIYVFFYIFMNLGTFACIIL, FSLTLCLLSLGGLPPLTGFFG, GFYLLVFIALITSVISLYYYL, and FVMIFCVLGSTFLGIIINPIF.

The protein belongs to the complex I subunit 2 family. NDH is composed of at least 16 different subunits, 5 of which are encoded in the nucleus.

The protein localises to the plastid. Its subcellular location is the chloroplast thylakoid membrane. It carries out the reaction a plastoquinone + NADH + (n+1) H(+)(in) = a plastoquinol + NAD(+) + n H(+)(out). The catalysed reaction is a plastoquinone + NADPH + (n+1) H(+)(in) = a plastoquinol + NADP(+) + n H(+)(out). In terms of biological role, NDH shuttles electrons from NAD(P)H:plastoquinone, via FMN and iron-sulfur (Fe-S) centers, to quinones in the photosynthetic chain and possibly in a chloroplast respiratory chain. The immediate electron acceptor for the enzyme in this species is believed to be plastoquinone. Couples the redox reaction to proton translocation, and thus conserves the redox energy in a proton gradient. The sequence is that of NAD(P)H-quinone oxidoreductase subunit 2, chloroplastic from Marchantia polymorpha (Common liverwort).